The sequence spans 221 residues: Octanoyltransferase (221 aa).

The region spanning 35 to 221 (ESYENRIIFC…RELLAALLSK (187 aa)) is the BPL/LPL catalytic domain. Residues 80 to 87 (RGGDITYH), 152 to 154 (AIG), and 165 to 167 (GLA) each bind substrate. Cys-183 functions as the Acyl-thioester intermediate in the catalytic mechanism.

This sequence belongs to the LipB family.

The protein localises to the cytoplasm. The catalysed reaction is octanoyl-[ACP] + L-lysyl-[protein] = N(6)-octanoyl-L-lysyl-[protein] + holo-[ACP] + H(+). Its pathway is protein modification; protein lipoylation via endogenous pathway; protein N(6)-(lipoyl)lysine from octanoyl-[acyl-carrier-protein]: step 1/2. In terms of biological role, catalyzes the transfer of endogenously produced octanoic acid from octanoyl-acyl-carrier-protein onto the lipoyl domains of lipoate-dependent enzymes. Lipoyl-ACP can also act as a substrate although octanoyl-ACP is likely to be the physiological substrate. This Bacteroides fragilis (strain YCH46) protein is Octanoyltransferase.